A 245-amino-acid polypeptide reads, in one-letter code: MIKLVLIRHGQSLWNLENRFTGWTDVDLSENGLSEAREAGAILKKNGYTFDVAYTSVLKRAIRTLWIVLHEMNLAWVPVHKSWKLNERHYGALQGLNKDETAQKYGEEQVHIWRRSIDVRPPALTEDDPRYEMNDPRYKALKKGEFPLTECLVDTEKRVLDYWHSEIAPKLKNGNKVIISSHGNTIRSLVKYLDNLSSDGVVSLNIPTSIPLVYELDENLRPIRHYYLSMDGEVPEGEIPKHISF.

Substrate-binding positions include 8–15 (RHGQSLWN), 21–22 (TG), Arg-60, 87–90 (ERHY), Lys-98, 114–115 (RR), and 183–184 (GN). Catalysis depends on His-9, which acts as the Tele-phosphohistidine intermediate. Glu-87 serves as the catalytic Proton donor/acceptor.

The protein belongs to the phosphoglycerate mutase family. BPG-dependent PGAM subfamily.

The catalysed reaction is (2R)-2-phosphoglycerate = (2R)-3-phosphoglycerate. It functions in the pathway carbohydrate degradation; glycolysis; pyruvate from D-glyceraldehyde 3-phosphate: step 3/5. Catalyzes the interconversion of 2-phosphoglycerate and 3-phosphoglycerate. This is 2,3-bisphosphoglycerate-dependent phosphoglycerate mutase from Bacillus cereus (strain ZK / E33L).